The chain runs to 211 residues: NADH-quinone oxidoreductase subunit I (211 aa).

The disordered stretch occupies residues 1 to 27 (MANTDRPALPHKRAVPPSRADSGPRRR). 2 consecutive 4Fe-4S ferredoxin-type domains span residues 71–101 (LNRY…VEGA) and 117–146 (RVYQ…MTYD). Cys-81, Cys-84, Cys-87, Cys-91, Cys-126, Cys-129, Cys-132, and Cys-136 together coordinate [4Fe-4S] cluster.

This sequence belongs to the complex I 23 kDa subunit family. In terms of assembly, NDH-1 is composed of 14 different subunits. Subunits NuoA, H, J, K, L, M, N constitute the membrane sector of the complex. Requires [4Fe-4S] cluster as cofactor.

The protein localises to the cell membrane. It carries out the reaction a quinone + NADH + 5 H(+)(in) = a quinol + NAD(+) + 4 H(+)(out). Functionally, NDH-1 shuttles electrons from NADH, via FMN and iron-sulfur (Fe-S) centers, to quinones in the respiratory chain. The immediate electron acceptor for the enzyme in this species is believed to be menaquinone. Couples the redox reaction to proton translocation (for every two electrons transferred, four hydrogen ions are translocated across the cytoplasmic membrane), and thus conserves the redox energy in a proton gradient. The protein is NADH-quinone oxidoreductase subunit I of Mycobacterium bovis (strain ATCC BAA-935 / AF2122/97).